A 325-amino-acid polypeptide reads, in one-letter code: Dimethylsulfide dehydrogenase subunit beta (325 aa).

4Fe-4S ferredoxin-type domains are found at residues Ile-6–Arg-35, Ser-123–Glu-154, and Gly-156–Gln-185. Positions 15, 18, 21, 25, 132, 135, and 140 each coordinate [4Fe-4S] cluster. Positions 144, 165, and 171 each coordinate [3Fe-4S] cluster. Residues Cys-175, Cys-192, Cys-195, Cys-207, and Cys-211 each coordinate [4Fe-4S] cluster.

Heterotrimer of alpha, beta and gamma subunits. [3Fe-4S] cluster serves as cofactor. It depends on [4Fe-4S] cluster as a cofactor.

It is found in the periplasm. Electron transfer subunit of the dehydrogenase during anaerobic growth on dimethyl sulfide. The polypeptide is Dimethylsulfide dehydrogenase subunit beta (ddhB) (Rhodovulum sulfidophilum (Rhodobacter sulfidophilus)).